A 326-amino-acid polypeptide reads, in one-letter code: N-acetyl-gamma-glutamyl-phosphate reductase (326 aa).

Cysteine 155 is a catalytic residue.

The protein belongs to the NAGSA dehydrogenase family. Type 1 subfamily.

Its subcellular location is the cytoplasm. The catalysed reaction is N-acetyl-L-glutamate 5-semialdehyde + phosphate + NADP(+) = N-acetyl-L-glutamyl 5-phosphate + NADPH + H(+). Its pathway is amino-acid biosynthesis; L-arginine biosynthesis; N(2)-acetyl-L-ornithine from L-glutamate: step 3/4. Catalyzes the NADPH-dependent reduction of N-acetyl-5-glutamyl phosphate to yield N-acetyl-L-glutamate 5-semialdehyde. In Shewanella oneidensis (strain ATCC 700550 / JCM 31522 / CIP 106686 / LMG 19005 / NCIMB 14063 / MR-1), this protein is N-acetyl-gamma-glutamyl-phosphate reductase.